The sequence spans 124 residues: Large ribosomal subunit protein bL12 (124 aa).

The protein belongs to the bacterial ribosomal protein bL12 family. As to quaternary structure, homodimer. Part of the ribosomal stalk of the 50S ribosomal subunit. Forms a multimeric L10(L12)X complex, where L10 forms an elongated spine to which 2 to 4 L12 dimers bind in a sequential fashion. Binds GTP-bound translation factors.

Forms part of the ribosomal stalk which helps the ribosome interact with GTP-bound translation factors. Is thus essential for accurate translation. The chain is Large ribosomal subunit protein bL12 from Idiomarina loihiensis (strain ATCC BAA-735 / DSM 15497 / L2-TR).